The following is a 241-amino-acid chain: Small ribosomal subunit protein uS2 (241 aa).

This sequence belongs to the universal ribosomal protein uS2 family.

This is Small ribosomal subunit protein uS2 from Photorhabdus laumondii subsp. laumondii (strain DSM 15139 / CIP 105565 / TT01) (Photorhabdus luminescens subsp. laumondii).